A 294-amino-acid polypeptide reads, in one-letter code: Putative sugar lactone lactonase (294 aa).

Positions 21, 150, and 201 each coordinate a divalent metal cation. Aspartate 201 (proton donor/acceptor) is an active-site residue.

It belongs to the SMP-30/CGR1 family. A divalent metal cation serves as cofactor.

Its function is as follows. Involved in the degradation of galactose via the DeLey-Doudoroff pathway. This is Putative sugar lactone lactonase from Rhizobium meliloti (strain 1021) (Ensifer meliloti).